The sequence spans 338 residues: MESGKTTIAKIIKRNEPGGRVPIWLMRQAGRSLPEYRKAVENMNNFMEICYNTDLVTELTLQPVTRFDMDAAIIFSDILIIADVLGCDVNFVRGVGPIIKPVESPKELKGPQEIETKTLPILNAIKKVRSQLPKEKSLIGFAGGPWTVASYIIEGGSSKTFSKVLNFYPSCLKEIIERITEVTIIYLIKQIEFGADVIQLFDSNAGALSEPLFKEYVIEPTKRIILAIKDRFSDFPIIGFPRSAGNLYKDYCEQTGVSAVSIDYNVPIKWAKANLNIPLQGNLDPNLLAYNKTEAIKEAKRIIDCFRDLPFIFNLGHGVLPDTPVENIAALVNLVKSY.

Residues 27–31, D77, Y151, S203, and H317 each bind substrate; that span reads RQAGR.

Belongs to the uroporphyrinogen decarboxylase family. In terms of assembly, homodimer.

It localises to the cytoplasm. It carries out the reaction uroporphyrinogen III + 4 H(+) = coproporphyrinogen III + 4 CO2. Its pathway is porphyrin-containing compound metabolism; protoporphyrin-IX biosynthesis; coproporphyrinogen-III from 5-aminolevulinate: step 4/4. Functionally, catalyzes the decarboxylation of four acetate groups of uroporphyrinogen-III to yield coproporphyrinogen-III. The polypeptide is Uroporphyrinogen decarboxylase (Wolbachia sp. subsp. Drosophila simulans (strain wRi)).